We begin with the raw amino-acid sequence, 508 residues long: Photosystem II CP47 reaction center protein (508 aa).

Transmembrane regions (helical) follow at residues 21 to 36 (SVHIMHTALVAGWAGS), 101 to 115 (IVFSGLCFLAAIWHW), 140 to 156 (GIHLFLSGVACFGFGAF), 203 to 218 (IAAGTLGILAGLFHLS), 237 to 252 (VLSSSIAAVFFAAFVV), and 457 to 472 (SFALLFFFGHIWHGAR).

This sequence belongs to the PsbB/PsbC family. PsbB subfamily. In terms of assembly, PSII is composed of 1 copy each of membrane proteins PsbA, PsbB, PsbC, PsbD, PsbE, PsbF, PsbH, PsbI, PsbJ, PsbK, PsbL, PsbM, PsbT, PsbX, PsbY, PsbZ, Psb30/Ycf12, at least 3 peripheral proteins of the oxygen-evolving complex and a large number of cofactors. It forms dimeric complexes. The cofactor is Binds multiple chlorophylls. PSII binds additional chlorophylls, carotenoids and specific lipids..

The protein localises to the plastid. It localises to the chloroplast thylakoid membrane. Its function is as follows. One of the components of the core complex of photosystem II (PSII). It binds chlorophyll and helps catalyze the primary light-induced photochemical processes of PSII. PSII is a light-driven water:plastoquinone oxidoreductase, using light energy to abstract electrons from H(2)O, generating O(2) and a proton gradient subsequently used for ATP formation. This is Photosystem II CP47 reaction center protein from Aethionema cordifolium (Lebanon stonecress).